A 332-amino-acid chain; its full sequence is UPF0194 membrane protein YbhG (332 aa).

Residues 1 to 16 (MMKKTVVIGLAVVVLA) form the signal peptide. Positions 108-209 (EEIAQAAAAV…LNLQDSTLIA (102 aa)) form a coiled coil.

The protein belongs to the UPF0194 family.

The protein resides in the periplasm. This chain is UPF0194 membrane protein YbhG, found in Shigella dysenteriae serotype 1 (strain Sd197).